Here is a 405-residue protein sequence, read N- to C-terminus: MSESEQYSRNTLMDFIEYRPLDIEICDVTLRDGEQTPGVVFTKEQKLAVASELDSMGIEVIEAGFPVVSAYEKEIVKEIANQGYDSRICCLSRAVKGDVDAALDCDVDIVSIFIAMSDMHLKYKYHRTLEDMLGCAKEAIEYATDHGLNVRFAAEDASRTPIDRLKQAFKEVENEYKVQYVSLADTIGILNPTTTHYLVSEIFKCVNTSICIHCHDDLGMATANTLAAAEAGAKQLHTTVNGIGERAGNASLEEMLVALRVQYGIERYDTTKLTALSRMISEYSNITPSVNKAVVGQNAFTHESGIHVAAILEEPRTYELFLPEMVGGKRNLVVGKHTGTKALKGIINSIGFCLEREELCALIEKVKVCTDEKRRSISREQLEKLIAQVRQEQKPSASEKEKFSI.

The region spanning 23 to 274 (IEICDVTLRD…IERYDTTKLT (252 aa)) is the Pyruvate carboxyltransferase domain.

It belongs to the alpha-IPM synthase/homocitrate synthase family.

It carries out the reaction acetyl-CoA + 2-oxoglutarate + H2O = (2R)-homocitrate + CoA + H(+). The catalysed reaction is 2-oxoadipate + acetyl-CoA + H2O = (R)-dihomocitrate + CoA + H(+). The enzyme catalyses 2-oxoheptanedioate + acetyl-CoA + H2O = (R)-trihomocitrate + CoA + H(+). Its pathway is organic acid metabolism; 2-oxosuberate biosynthesis. In terms of biological role, catalyzes the condensation of alpha-ketoglutarate and acetyl-CoA to form (R)-homocitrate. Can also catalyze the condensation of alpha-ketoadipate with acetyl-CoA to form (R)-homo(2)citrate, and the condensation of alpha-ketopimelate with acetyl-CoA to form (R)-homo(3)citrate. These reactions are part of the biosynthesis pathway of coenzyme B and biotin. In Methanosarcina acetivorans (strain ATCC 35395 / DSM 2834 / JCM 12185 / C2A), this protein is Homocitrate synthase AksA (aksA).